The chain runs to 83 residues: Putative beta-neurotoxin RjAa12f (83 aa).

The signal sequence occupies residues 1–18 (MKILIFIIASFMLIGVEC). Positions 19 to 82 (KEGYPMGRDG…VWDSSTNKCG (64 aa)) constitute an LCN-type CS-alpha/beta domain. 4 disulfide bridges follow: cysteine 29/cysteine 81, cysteine 33/cysteine 55, cysteine 40/cysteine 62, and cysteine 44/cysteine 64. A propeptide is located at residue glycine 83.

Post-translationally, contains 4 disulfide bonds. Expressed by the venom gland.

The protein localises to the secreted. Functionally, beta toxins bind voltage-independently at site-4 of sodium channels (Nav) and shift the voltage of activation toward more negative potentials thereby affecting sodium channel activation and promoting spontaneous and repetitive firing. This toxin is lethal to insects (A.domestica). It is not toxic to mice and does not affect mammal F11 sodium channels. This Rhopalurus junceus (Caribbean blue scorpion) protein is Putative beta-neurotoxin RjAa12f.